The chain runs to 335 residues: Succinylglutamate desuccinylase (335 aa).

Zn(2+) contacts are provided by His-59, Glu-62, and His-151. Glu-215 is a catalytic residue.

Belongs to the AspA/AstE family. Succinylglutamate desuccinylase subfamily. Requires Zn(2+) as cofactor.

It carries out the reaction N-succinyl-L-glutamate + H2O = L-glutamate + succinate. It participates in amino-acid degradation; L-arginine degradation via AST pathway; L-glutamate and succinate from L-arginine: step 5/5. In terms of biological role, transforms N(2)-succinylglutamate into succinate and glutamate. The chain is Succinylglutamate desuccinylase from Pseudomonas putida (strain GB-1).